The chain runs to 629 residues: UvrABC system protein C (629 aa).

The GIY-YIG domain maps to 26–105 (TSPGIYQFKN…IKELKPRYNV (80 aa)). In terms of domain architecture, UVR spans 219–254 (SALIRSLTENMHLAATELRFEQAAEIKAQIESLKRY).

It belongs to the UvrC family. As to quaternary structure, interacts with UvrB in an incision complex.

It localises to the cytoplasm. In terms of biological role, the UvrABC repair system catalyzes the recognition and processing of DNA lesions. UvrC both incises the 5' and 3' sides of the lesion. The N-terminal half is responsible for the 3' incision and the C-terminal half is responsible for the 5' incision. The polypeptide is UvrABC system protein C (Chlorobium chlorochromatii (strain CaD3)).